We begin with the raw amino-acid sequence, 485 residues long: Bindin (485 aa).

The N-terminal stretch at 1–20 (MGFHQISVIIVVLALASARA) is a signal peptide. A propeptide spanning residues 21 to 247 (ADEFPSHTDT…DSERGARKKR (227 aa)) is cleaved from the precursor. Disordered stretches follow at residues 157–195 (GETR…DLAP), 219–273 (ISGH…PAQQ), and 305–331 (GGGQ…SDSL). Basic and acidic residues predominate over residues 172–192 (DVSKRASPRKGDEPAGHKLKD). The segment covering 250–264 (NQGNYPQAMNPQSRG) has biased composition (polar residues). The segment covering 317–331 (AEADNADYDEYSDSL) has biased composition (acidic residues). Positions 371 to 379 (LRHLRHHSN) are fucose-binding domain. Positions 459-485 (QQGMGGVPQRMGGQPQGNAYNQGYRQG) are disordered. A compositionally biased stretch (low complexity) spans 465 to 475 (VPQRMGGQPQG). Polar residues predominate over residues 476 to 485 (NAYNQGYRQG).

Belongs to the bindin family.

Its subcellular location is the cytoplasmic vesicle. It is found in the secretory vesicle. The protein resides in the acrosome lumen. Species-specific sea urchin sperm protein required for adhesion of sperm to the egg surface during fertilization. Bindin coats the acrosomal process after it is externalized by the acrosome reaction. It binds to sulfated, fucose-containing polysaccharides on the vitelline layer receptor proteoglycans which cover the egg plasma membrane. The polypeptide is Bindin (Mesocentrotus franciscanus (Giant red sea urchin)).